Consider the following 371-residue polypeptide: MPANFTEGSFDSSGTGQTLDSSPVACTETVTFTEVVEGKEWGSFYYSFKTEQLITLWVLFVFTIVGNSVVLFSTWRRKKKSRMTFFVTQLAITDSFTGLVNILTDINWRFTGDFTAPDLVCRVVRYLQVVLLYASTYVLVSLSIDRYHAIVYPMKFLQGEKQARVLIVIAWSLSFLFSIPTLIIFGKRTLSNGEVQCWALWPDDSYWTPYMTIVAFLVYFIPLTIISIMYGIVIRTIWIKSKTYETVISNCSDGKLCSSYNRGLISKAKIKAIKYSIIIILAFICCWSPYFLFDILDNFNLLPDTQERFYASVIIQNLPALNSAINPLIYCVFSSSISFPCREQRSQDSRMTFRERTERHEMQILSKPEFI.

Over residues 1 to 21 the composition is skewed to polar residues; it reads MPANFTEGSFDSSGTGQTLDS. The disordered stretch occupies residues 1-22; sequence MPANFTEGSFDSSGTGQTLDSS. Over 1-52 the chain is Extracellular; the sequence is MPANFTEGSFDSSGTGQTLDSSPVACTETVTFTEVVEGKEWGSFYYSFKTEQ. An N-linked (GlcNAc...) asparagine glycan is attached at N4. A helical membrane pass occupies residues 53–73; that stretch reads LITLWVLFVFTIVGNSVVLFS. The Cytoplasmic portion of the chain corresponds to 74 to 82; the sequence is TWRRKKKSR. A helical membrane pass occupies residues 83 to 103; sequence MTFFVTQLAITDSFTGLVNIL. The Extracellular portion of the chain corresponds to 104–123; the sequence is TDINWRFTGDFTAPDLVCRV. C121 and C197 are oxidised to a cystine. A helical transmembrane segment spans residues 124 to 144; the sequence is VRYLQVVLLYASTYVLVSLSI. At 145 to 164 the chain is on the cytoplasmic side; it reads DRYHAIVYPMKFLQGEKQAR. The helical transmembrane segment at 165–185 threads the bilayer; the sequence is VLIVIAWSLSFLFSIPTLIIF. Topologically, residues 186 to 212 are extracellular; it reads GKRTLSNGEVQCWALWPDDSYWTPYMT. A helical transmembrane segment spans residues 213–233; that stretch reads IVAFLVYFIPLTIISIMYGIV. The Cytoplasmic portion of the chain corresponds to 234-275; that stretch reads IRTIWIKSKTYETVISNCSDGKLCSSYNRGLISKAKIKAIKY. Residues 276 to 296 form a helical membrane-spanning segment; sequence SIIIILAFICCWSPYFLFDIL. The Extracellular portion of the chain corresponds to 297–312; the sequence is DNFNLLPDTQERFYAS. A helical membrane pass occupies residues 313 to 333; that stretch reads VIIQNLPALNSAINPLIYCVF. The Cytoplasmic segment spans residues 334–371; the sequence is SSSISFPCREQRSQDSRMTFRERTERHEMQILSKPEFI.

It belongs to the G-protein coupled receptor 1 family. Vasopressin/oxytocin receptor subfamily. In terms of tissue distribution, isoform 4 is ubiquitous; it is detected in glandular epithelia of bronchus, stomach, small intestine, colon, uterus, esophagus, spleen, kidney, pancreas, prostate and breast. Isoform 1 is detected in uterus, colon and prostate, and in the smooth muscle cell layer in bronchial and arterial walls (at protein level). Isoform 1 is predominantly expressed in smooth muscle. Isoform 4 is predominantly expressed in epithelial cells. In bronchial biopsies, it is expressed in smooth muscle cells of asthma patients, but not in control patients; whereas in epithelial cells, its expression is consistently stronger in asthma patients.

It localises to the cell membrane. The protein localises to the cytoplasm. In terms of biological role, G-protein coupled receptor for neuropeptide S (NPS). Promotes mobilization of intracellular Ca(2+) stores. Inhibits cell growth in response to NPS binding. Involved in pathogenesis of asthma and other IgE-mediated diseases. In Homo sapiens (Human), this protein is Neuropeptide S receptor (NPSR1).